Reading from the N-terminus, the 204-residue chain is Glycerol-3-phosphate acyltransferase (204 aa).

5 consecutive transmembrane segments (helical) span residues 12–32 (LVMGYLLGSLPSGYLAAHWLA), 85–105 (WQVAAGLAALAGHIWPVWLGW), 117–137 (MLLGISWPVGLACFGIFLTVL), 142–162 (IVSLSSIIAALSLPLLMILRF), and 163–183 (QGNSPPAYLAVAFAAMAMVVW).

The protein belongs to the PlsY family. As to quaternary structure, probably interacts with PlsX.

Its subcellular location is the cell inner membrane. The catalysed reaction is an acyl phosphate + sn-glycerol 3-phosphate = a 1-acyl-sn-glycero-3-phosphate + phosphate. It functions in the pathway lipid metabolism; phospholipid metabolism. Catalyzes the transfer of an acyl group from acyl-phosphate (acyl-PO(4)) to glycerol-3-phosphate (G3P) to form lysophosphatidic acid (LPA). This enzyme utilizes acyl-phosphate as fatty acyl donor, but not acyl-CoA or acyl-ACP. This Prochlorococcus marinus (strain MIT 9313) protein is Glycerol-3-phosphate acyltransferase.